A 622-amino-acid polypeptide reads, in one-letter code: MNKLNFHNNRVMQDRRSVCIFLPNDESLNIIINVKILCHQLLVQVCDLLRLKDCHLFGLSVIQNNEHVYMELSQKLYKYCPKEWKKEASKVRQYEVTWGIDQFGPPMIIHFRVQYYVENGRLISDRAARYYYYWHLRKQVLHSQCVLREEAYFLLAAFALQADLGNFKRNKHYGKYFEPEAYFPSWVVSKRGKDYILKHIPNMHKDQFALTASEAHLKYIKEAVRLDDVAVHYYRLYKDKREIEASLTLGLTMRGIQIFQNLDEEKQLLYDFPWTNVGKLVFVGKKFEILPDGLPSARKLIYYTGCPMRSRHLLQLLSNSHRLYMNLQPVLRHIRKLEENEEKKQYRESYISDNLDLDMDQLEKRSRASGSSAGSMKHKRLSRHSTASHSSSHTSGIEADTKPRDTGPEDSYSSSAIHRKLKTCSSMTSHGSSHTSGVESGGKDRLEEDLQDDEIEMLVDDPRDLEQMNEESLEVSPDMCIYITEDMLMSRKLNGHSGLIVKEIGSSTSSSSETVVKLRGQSTDSLPQTICRKPKTSTDRHSLSLDDIRLYQKDFLRIAGLCQDTAQSYTFGCGHELDEEGLYCNSCLAQQCINIQDAFPVKRTSKYFSLDLTHDEVPEFVV.

An FERM domain is found at 16–328 (RSVCIFLPND…NSHRLYMNLQ (313 aa)). Positions 364-445 (KRSRASGSSA…SGVESGGKDR (82 aa)) are disordered. Low complexity-rich tracts occupy residues 384-395 (HSTASHSSSHTS) and 425-438 (SSMT…TSGV). A Phosphoserine modification is found at S522. T523 carries the post-translational modification Phosphothreonine. A phosphoserine mark is found at S525, S542, and S544.

The protein localises to the cytoplasm. It is found in the cell membrane. The sequence is that of FERM domain-containing protein 6 (FRMD6) from Homo sapiens (Human).